We begin with the raw amino-acid sequence, 137 residues long: Small ribosomal subunit protein uS12 (137 aa).

Positions methionine 1–lysine 43 are disordered.

The protein belongs to the universal ribosomal protein uS12 family. As to quaternary structure, part of the 30S ribosomal subunit. Contacts proteins S8 and S17. May interact with IF1 in the 30S initiation complex.

Functionally, with S4 and S5 plays an important role in translational accuracy. Interacts with and stabilizes bases of the 16S rRNA that are involved in tRNA selection in the A site and with the mRNA backbone. Located at the interface of the 30S and 50S subunits, it traverses the body of the 30S subunit contacting proteins on the other side and probably holding the rRNA structure together. The combined cluster of proteins S8, S12 and S17 appears to hold together the shoulder and platform of the 30S subunit. This Oceanobacillus iheyensis (strain DSM 14371 / CIP 107618 / JCM 11309 / KCTC 3954 / HTE831) protein is Small ribosomal subunit protein uS12.